The sequence spans 156 residues: ATP synthase subunit b (156 aa).

The helical transmembrane segment at Ile3–Thr23 threads the bilayer.

It belongs to the ATPase B chain family. F-type ATPases have 2 components, F(1) - the catalytic core - and F(0) - the membrane proton channel. F(1) has five subunits: alpha(3), beta(3), gamma(1), delta(1), epsilon(1). F(0) has three main subunits: a(1), b(2) and c(10-14). The alpha and beta chains form an alternating ring which encloses part of the gamma chain. F(1) is attached to F(0) by a central stalk formed by the gamma and epsilon chains, while a peripheral stalk is formed by the delta and b chains.

It localises to the cell inner membrane. Its function is as follows. F(1)F(0) ATP synthase produces ATP from ADP in the presence of a proton or sodium gradient. F-type ATPases consist of two structural domains, F(1) containing the extramembraneous catalytic core and F(0) containing the membrane proton channel, linked together by a central stalk and a peripheral stalk. During catalysis, ATP synthesis in the catalytic domain of F(1) is coupled via a rotary mechanism of the central stalk subunits to proton translocation. Functionally, component of the F(0) channel, it forms part of the peripheral stalk, linking F(1) to F(0). The sequence is that of ATP synthase subunit b from Xanthomonas oryzae pv. oryzae (strain MAFF 311018).